Reading from the N-terminus, the 194-residue chain is Large ribosomal subunit protein uL24c (194 aa).

Residues 1–50 (MVAMAMASLQSSMSSLSLSSNSFLGQPLSPITLSPFLQGKPTEKKCLIVM) constitute a chloroplast transit peptide.

Belongs to the universal ribosomal protein uL24 family. Part of the 50S ribosomal subunit.

It localises to the plastid. The protein localises to the chloroplast. Functionally, one of two assembly initiator proteins, it binds directly to the 5'-end of the 23S rRNA, where it nucleates assembly of the 50S subunit. This Pisum sativum (Garden pea) protein is Large ribosomal subunit protein uL24c (RPL24).